A 427-amino-acid chain; its full sequence is Peptidase B (427 aa).

Positions 195 and 200 each coordinate Mn(2+). Lys-207 is a catalytic residue. 3 residues coordinate Mn(2+): Asp-218, Asp-277, and Glu-279. Arg-281 is an active-site residue.

The protein belongs to the peptidase M17 family. Homohexamer. The cofactor is Mn(2+).

The protein resides in the cytoplasm. It catalyses the reaction Release of an N-terminal amino acid, Xaa, from a peptide or arylamide. Xaa is preferably Glu or Asp but may be other amino acids, including Leu, Met, His, Cys and Gln.. Its function is as follows. Probably plays an important role in intracellular peptide degradation. The sequence is that of Peptidase B from Shigella flexneri serotype 5b (strain 8401).